The chain runs to 548 residues: Glucose-6-phosphate isomerase (548 aa).

Glu355 (proton donor) is an active-site residue. Active-site residues include His386 and Lys514.

This sequence belongs to the GPI family.

The protein resides in the cytoplasm. The enzyme catalyses alpha-D-glucose 6-phosphate = beta-D-fructose 6-phosphate. It participates in carbohydrate biosynthesis; gluconeogenesis. It functions in the pathway carbohydrate degradation; glycolysis; D-glyceraldehyde 3-phosphate and glycerone phosphate from D-glucose: step 2/4. Its function is as follows. Catalyzes the reversible isomerization of glucose-6-phosphate to fructose-6-phosphate. This is Glucose-6-phosphate isomerase from Photorhabdus laumondii subsp. laumondii (strain DSM 15139 / CIP 105565 / TT01) (Photorhabdus luminescens subsp. laumondii).